Here is a 109-residue protein sequence, read N- to C-terminus: Small ribosomal subunit protein uS17A (109 aa).

It belongs to the universal ribosomal protein uS17 family. As to quaternary structure, part of the 30S ribosomal subunit.

Its function is as follows. One of the primary rRNA binding proteins, it binds specifically to the 5'-end of 16S ribosomal RNA. The sequence is that of Small ribosomal subunit protein uS17A from Methanosarcina acetivorans (strain ATCC 35395 / DSM 2834 / JCM 12185 / C2A).